We begin with the raw amino-acid sequence, 658 residues long: UvrABC system protein B (658 aa).

The region spanning 25–416 (KSLKNNNHYQ…QKNVAEQIIR (392 aa)) is the Helicase ATP-binding domain. Position 38–45 (38–45 (GVTGSGKT)) interacts with ATP. The Beta-hairpin signature appears at 91 to 114 (HFDYYQPESYIPRRDLFIEKDSSI). The region spanning 433-607 (QVQDLFDEIK…ELKLRDDEIK (175 aa)) is the Helicase C-terminal domain. The region spanning 623 to 658 (EKIIKELDKKMRERAKNLDFEEAMRLRDEIAQLRTL) is the UVR domain.

It belongs to the UvrB family. As to quaternary structure, forms a heterotetramer with UvrA during the search for lesions. Interacts with UvrC in an incision complex.

Its subcellular location is the cytoplasm. Its function is as follows. The UvrABC repair system catalyzes the recognition and processing of DNA lesions. A damage recognition complex composed of 2 UvrA and 2 UvrB subunits scans DNA for abnormalities. Upon binding of the UvrA(2)B(2) complex to a putative damaged site, the DNA wraps around one UvrB monomer. DNA wrap is dependent on ATP binding by UvrB and probably causes local melting of the DNA helix, facilitating insertion of UvrB beta-hairpin between the DNA strands. Then UvrB probes one DNA strand for the presence of a lesion. If a lesion is found the UvrA subunits dissociate and the UvrB-DNA preincision complex is formed. This complex is subsequently bound by UvrC and the second UvrB is released. If no lesion is found, the DNA wraps around the other UvrB subunit that will check the other stand for damage. This Helicobacter pylori (strain J99 / ATCC 700824) (Campylobacter pylori J99) protein is UvrABC system protein B.